We begin with the raw amino-acid sequence, 345 residues long: Low-density lipoprotein receptor class A domain-containing protein 3 (345 aa).

The N-terminal stretch at 1-17 is a signal peptide; it reads MWLLGPLCLLLSSAAES. Residues 18 to 173 lie on the Extracellular side of the membrane; the sequence is QLLPGNNFTN…NQLVYYPSIT (156 aa). N24 carries N-linked (GlcNAc...) asparagine glycosylation. 3 consecutive LDL-receptor class A domains span residues 28-65, 70-107, and 112-148; these read ECNIPGNFMCSNGRCIPGAWQCDGLPDCFDKSDEKECP, KCGPTFFPCASGIHCIIGRFRCNGFEDCPDGSDEENCT, and LCSTARYHCKNGLCIDKSFICDGQNNCQDNSDEESCE. Cystine bridges form between C29–C42, C37–C55, C49–C64, C71–C84, C78–C97, C91–C106, C113–C125, C120–C138, and C132–C147. A (Microbial infection) Interaction with Venezuelan equine encephalitis virus/VEEV spike proteins E1 and E2 region spans residues 30–57; the sequence is NIPGNFMCSNGRCIPGAWQCDGLPDCFD. A helical membrane pass occupies residues 174 to 194; that stretch reads YAIIGSSVIFVLVVALLALVL. At 195–345 the chain is on the cytoplasmic side; the sequence is HHQRKRNNLM…SEPSQGTEEV (151 aa). 2 short sequence motifs (involved in ITCH interaction) span residues 256–259 and 275–278; these read PPSY and PPPY. Residues 270–345 are disordered; that stretch reads WYDLPPPPYS…SEPSQGTEEV (76 aa). Over residues 295 to 313 the composition is skewed to low complexity; sequence SRSGSANSASSQAASSLLS.

It belongs to the LDLR family. In terms of assembly, interacts with APP precursor C-terminus. Interacts directly with ITCH; this interaction promotes ITCH auto-ubiquitination leading to its degradation. Interacts directly with NEDD4; this interaction promotes NEDD4 auto-ubiquitination. Interacts directly with NEDD4L. As to quaternary structure, (Microbial infection) Interacts (via domain LDL-receptor class A 1) with Venezuelan equine encephalitis virus/VEEV spike proteins E1 and E2. As to expression, expressed at high levels in brain, lung, skeletal muscle, and pancreas. Expressed at moderate levels in heart, placenta, and kidney but not detected in the liver.

Its subcellular location is the cell membrane. Functionally, may influence APP processing, resulting in a decrease in sAPP-alpha production and increased amyloidogenic P3 peptide production. May regulate ITCH and NEDD4 E3 ligase activity and degradation. Its function is as follows. (Microbial infection) Acts as a receptor for Venezuelan equine encephalitis virus. In Homo sapiens (Human), this protein is Low-density lipoprotein receptor class A domain-containing protein 3.